A 217-amino-acid polypeptide reads, in one-letter code: Large ribosomal subunit protein uL4 (217 aa).

Residues 46–102 are disordered; it reads KRQGTHSAKTRAEVSGGGRKPFRQKGTGRARQGSIRAPHFTGGGISHGPKPRDYSQR.

It belongs to the universal ribosomal protein uL4 family. In terms of assembly, part of the 50S ribosomal subunit.

Its function is as follows. One of the primary rRNA binding proteins, this protein initially binds near the 5'-end of the 23S rRNA. It is important during the early stages of 50S assembly. It makes multiple contacts with different domains of the 23S rRNA in the assembled 50S subunit and ribosome. In terms of biological role, forms part of the polypeptide exit tunnel. In Corynebacterium diphtheriae (strain ATCC 700971 / NCTC 13129 / Biotype gravis), this protein is Large ribosomal subunit protein uL4.